We begin with the raw amino-acid sequence, 1323 residues long: ABC transporter C family member 12 (1323 aa).

Residues 110–396 (HCISLFFYSI…LPILIALGIQ (287 aa)) form the ABC transmembrane type-1 1 domain. 6 helical membrane passes run 111-131 (CISLFFYSIYVGSQFVGPEIL), 152-172 (MGYYYALIMFGTAMIGSFCNY), 227-247 (VFGILNNGLFALPQIIICLAL), 252-272 (IGWPTFVGLGLMLAAIPFNGL), 338-358 (ILIAMIGAIPTAASILVFSTY), and 375-395 (SYLNLLKIPLGFLPILIALGI). The ABC transporter 1 domain maps to 428-652 (VYMKNSTTTW…KLEFASLLQE (225 aa)). 464-471 (GSVGSGKS) serves as a coordination point for ATP. The interval 657-695 (ENTKGDDSDDDDDKKDDDKKEEKVEKPKQSDKDGTLISE) is disordered. The span at 672–690 (DDDKKEEKVEKPKQSDKDG) shows a compositional bias: basic and acidic residues. 5 helical membrane passes run 712–732 (VTAGGGLLFLFAMILFLLETG), 772–792 (IYIGVGMASIIVTVVRTFSFF), 840–860 (LIATSIAQFFTLMLSVLATLI), 862–882 (ISIIVPWLLIPLAPICILFFI), and 952–972 (WLGLRLDFLGNLIVFFSCIFI). Residues 720–1010 (FLFAMILFLL…GVLQAADTET (291 aa)) enclose the ABC transmembrane type-1 2 domain. The ABC transporter 2 domain maps to 1047 to 1281 (IKFDNLVMRY…QNGLLTWLVN (235 aa)). Residue 1081–1088 (GRTGAGKS) coordinates ATP.

Belongs to the ABC transporter superfamily. ABCC family. Conjugate transporter (TC 3.A.1.208) subfamily.

The protein localises to the membrane. In Dictyostelium discoideum (Social amoeba), this protein is ABC transporter C family member 12 (abcC12).